The following is a 213-amino-acid chain: Serine acetyltransferase (213 aa).

It belongs to the transferase hexapeptide repeat family.

The protein localises to the cytoplasm. It catalyses the reaction L-serine + acetyl-CoA = O-acetyl-L-serine + CoA. The protein operates within amino-acid biosynthesis; L-cysteine biosynthesis; L-cysteine from L-serine: step 1/2. The sequence is that of Serine acetyltransferase (cysE) from Staphylococcus aureus (strain COL).